The following is a 400-amino-acid chain: Acetate kinase (400 aa).

Asn-10 is a binding site for Mg(2+). Lys-17 serves as a coordination point for ATP. Arg-89 lines the substrate pocket. Catalysis depends on Asp-148, which acts as the Proton donor/acceptor. ATP contacts are provided by residues 208–212 (HLGNG), 283–285 (DCR), and 331–335 (GIGEN). Position 385 (Glu-385) interacts with Mg(2+).

It belongs to the acetokinase family. In terms of assembly, homodimer. It depends on Mg(2+) as a cofactor. Requires Mn(2+) as cofactor.

It localises to the cytoplasm. The enzyme catalyses acetate + ATP = acetyl phosphate + ADP. It functions in the pathway metabolic intermediate biosynthesis; acetyl-CoA biosynthesis; acetyl-CoA from acetate: step 1/2. Catalyzes the formation of acetyl phosphate from acetate and ATP. Can also catalyze the reverse reaction. The protein is Acetate kinase of Haemophilus ducreyi (strain 35000HP / ATCC 700724).